Here is a 564-residue protein sequence, read N- to C-terminus: MFS-type efflux transporter ffsH (564 aa).

Residues Met-1–Met-18 show a composition bias toward basic and acidic residues. A disordered region spans residues Met-1–Lys-37. Over residues Ser-21–Ala-35 the composition is skewed to polar residues. Helical transmembrane passes span Tyr-43 to Met-63, Tyr-98 to Asn-118, Gly-131 to Met-151, and Phe-157 to Gly-177. N-linked (GlcNAc...) asparagine glycosylation occurs at Asn-182. 9 consecutive transmembrane segments (helical) span residues Trp-187–Leu-207, Val-226–Gly-246, Ala-254–Trp-274, Phe-300–Tyr-320, Val-334–Val-354, Pro-362–Thr-382, Ala-389–Leu-409, Thr-427–Phe-447, and Val-502–Glu-522. Positions Gly-540–Val-564 are disordered. Asn-553 is a glycosylation site (N-linked (GlcNAc...) asparagine).

This sequence belongs to the major facilitator superfamily.

The protein resides in the cell membrane. Its function is as follows. MFS-type efflux transporter; part of the gene cluster that mediates the biosynthesis of the cytotoxic leucine-containing cytochalasans, including aspochalasin C, aspochalasin E, TMC-169, flavichalasine F, aspergillin PZ, aspochalasin M and flavichalasine G. FfsH might be involved in the excretion of cytochalasans. The chain is MFS-type efflux transporter ffsH from Aspergillus flavipes.